Consider the following 775-residue polypeptide: 5-methyltetrahydropteroyltriglutamate--homocysteine methyltransferase (775 aa).

Residues 16 to 19 and Lys115 each bind 5-methyltetrahydropteroyltri-L-glutamate; that span reads REMK. L-homocysteine is bound by residues 435–437 and Glu488; that span reads IGS. Residues 435–437 and Glu488 each bind L-methionine; that span reads IGS. 5-methyltetrahydropteroyltri-L-glutamate is bound by residues 519 to 520 and Trp565; that span reads RC. Position 603 (Asp603) interacts with L-homocysteine. Asp603 lines the L-methionine pocket. Position 609 (Glu609) interacts with 5-methyltetrahydropteroyltri-L-glutamate. Zn(2+)-binding residues include His645, Cys647, and Glu669. His698 functions as the Proton donor in the catalytic mechanism. Residue Cys730 participates in Zn(2+) binding.

This sequence belongs to the vitamin-B12 independent methionine synthase family. The cofactor is Zn(2+).

The enzyme catalyses 5-methyltetrahydropteroyltri-L-glutamate + L-homocysteine = tetrahydropteroyltri-L-glutamate + L-methionine. It functions in the pathway amino-acid biosynthesis; L-methionine biosynthesis via de novo pathway; L-methionine from L-homocysteine (MetE route): step 1/1. Catalyzes the transfer of a methyl group from 5-methyltetrahydrofolate to homocysteine resulting in methionine formation. In Coxiella burnetii (strain CbuG_Q212) (Coxiella burnetii (strain Q212)), this protein is 5-methyltetrahydropteroyltriglutamate--homocysteine methyltransferase.